A 191-amino-acid polypeptide reads, in one-letter code: Protein GrpE (191 aa).

It belongs to the GrpE family. Homodimer.

The protein resides in the cytoplasm. Its function is as follows. Participates actively in the response to hyperosmotic and heat shock by preventing the aggregation of stress-denatured proteins, in association with DnaK and GrpE. It is the nucleotide exchange factor for DnaK and may function as a thermosensor. Unfolded proteins bind initially to DnaJ; upon interaction with the DnaJ-bound protein, DnaK hydrolyzes its bound ATP, resulting in the formation of a stable complex. GrpE releases ADP from DnaK; ATP binding to DnaK triggers the release of the substrate protein, thus completing the reaction cycle. Several rounds of ATP-dependent interactions between DnaJ, DnaK and GrpE are required for fully efficient folding. This chain is Protein GrpE, found in Listeria monocytogenes serotype 1/2a (strain 10403S).